The following is a 291-amino-acid chain: Isopentenyl-diphosphate Delta-isomerase I, chloroplastic (291 aa).

The N-terminal 52 residues, 1-52 (MSTASLFSFPSFHLRSLLPSLSSSSSSSSSRFAPPRLSPIRSPAPRTQLSVR), are a transit peptide targeting the chloroplast. The residue at position 2 (serine 2) is an N-acetylthreonine. Residues 20-39 (SLSSSSSSSSSRFAPPRLSP) show a composition bias toward low complexity. Positions 20–43 (SLSSSSSSSSSRFAPPRLSPIRSP) are disordered. Substrate is bound at residue lysine 95. Mg(2+) contacts are provided by histidine 99 and histidine 111. The 153-residue stretch at 109–261 (LLHRAFSVFL…AVKLSPWFRL (153 aa)) folds into the Nudix hydrolase domain. Substrate contacts are provided by arginine 130 and lysine 134. Cysteine 146 is an active-site residue. Serine 147 contacts substrate. The Nudix box signature appears at 147 to 177 (SHPLYRESELIEENVLGVRNAAQRKLFDELG). 2 residues coordinate Mg(2+): glutamate 206 and glutamate 208. The active site involves glutamate 208.

This sequence belongs to the IPP isomerase type 1 family. Mg(2+) is required as a cofactor.

Its subcellular location is the plastid. The protein resides in the chloroplast. It localises to the cytoplasm. The enzyme catalyses isopentenyl diphosphate = dimethylallyl diphosphate. It functions in the pathway isoprenoid biosynthesis; dimethylallyl diphosphate biosynthesis; dimethylallyl diphosphate from isopentenyl diphosphate: step 1/1. The protein operates within porphyrin-containing compound metabolism; chlorophyll biosynthesis. Catalyzes the 1,3-allylic rearrangement of the homoallylic substrate isopentenyl (IPP) to its highly electrophilic allylic isomer, dimethylallyl diphosphate (DMAPP). This Arabidopsis thaliana (Mouse-ear cress) protein is Isopentenyl-diphosphate Delta-isomerase I, chloroplastic (IPP1).